We begin with the raw amino-acid sequence, 585 residues long: MAGUK p55 subfamily member 3 (585 aa).

L27 domains lie at 6 to 60 and 61 to 118; these read EDSG…ERQS and PTPV…FDPV. Residues 137-218 form the PDZ domain; that stretch reads IVRLVKNKEP…SITLKIIPAT (82 aa). Residues 226–296 enclose the SH3 domain; sequence ESKVFMRALF…PSKQFQERRL (71 aa). A Phosphoserine modification is found at Ser307. One can recognise a Guanylate kinase-like domain in the interval 385–570; the sequence is SRLVVLIGSL…VCSQLRAVIE (186 aa). Residues 510 to 530 are disordered; the sequence is KRKTPPVSPDSEDPATPLDEQ.

This sequence belongs to the MAGUK family. Interacts with HTR2C; this interaction stabilizes the receptor at the plasma membrane and prevents the desensitization of the HTR2C receptor-mediated calcium response. Interacts with HTR2A. Interacts with HTR4. Interacts (via PDZ domain) with CADM1 (via C-terminus)Interacts (via PDZ domain) with CADM1; this interaction connects CADM1 with DLG1. Interacts (via Guanylate kinase-like domain) with PALS1. Interacts with DLG1 (via N-terminus); this interaction connects CADM1 with DLG1 and links CADM1 with the regulatory subunit of phosphoinositide-3-kinase (PI3K) by forming a multiprotein complex and participates in cell spreading.

The protein resides in the apical cell membrane. Its subcellular location is the cell membrane. It is found in the cell junction. It localises to the adherens junction. Participates in cell spreading through the phosphoinositide-3-kinase (PI3K) pathway by connecting CADM1 to DLG1 and the regulatory subunit of phosphoinositide-3-kinase (PI3K). Stabilizes HTR2C at the plasma membrane and prevents its desensitization. May participates in the maintenance of adherens junctions. The protein is MAGUK p55 subfamily member 3 of Rattus norvegicus (Rat).